The primary structure comprises 218 residues: Ribose-5-phosphate isomerase A (218 aa).

Residues 28-31 (TGST), 81-84 (DGAD), and 94-97 (KGGG) each bind substrate. Residue glutamate 103 is the Proton acceptor of the active site. Lysine 121 serves as a coordination point for substrate.

This sequence belongs to the ribose 5-phosphate isomerase family. In terms of assembly, homodimer.

The catalysed reaction is aldehydo-D-ribose 5-phosphate = D-ribulose 5-phosphate. Its pathway is carbohydrate degradation; pentose phosphate pathway; D-ribose 5-phosphate from D-ribulose 5-phosphate (non-oxidative stage): step 1/1. Its function is as follows. Catalyzes the reversible conversion of ribose-5-phosphate to ribulose 5-phosphate. The chain is Ribose-5-phosphate isomerase A from Alcanivorax borkumensis (strain ATCC 700651 / DSM 11573 / NCIMB 13689 / SK2).